A 324-amino-acid polypeptide reads, in one-letter code: RING-H2 finger protein ATL3 (324 aa).

The chain crosses the membrane as a helical span at residues 24 to 44 (IILTAIIVLFMAVLFVLILHL). The segment at 127–169 (CSICLSELVKGDKARLLPKCNHSFHVECIDMWFQSHSTCPICR) adopts an RING-type; atypical zinc-finger fold. Disordered stretches follow at residues 179-210 (SSKR…STSS), 226-248 (VSTG…ASQS), and 299-324 (RDKR…SVDP). Composition is skewed to polar residues over residues 192–210 (NAGT…STSS) and 226–235 (VSTGNTNVGT). The segment covering 306-324 (SNSSTSNSSSSNAVASVDP) has biased composition (low complexity).

It belongs to the RING-type zinc finger family. ATL subfamily.

It is found in the membrane. The enzyme catalyses S-ubiquitinyl-[E2 ubiquitin-conjugating enzyme]-L-cysteine + [acceptor protein]-L-lysine = [E2 ubiquitin-conjugating enzyme]-L-cysteine + N(6)-ubiquitinyl-[acceptor protein]-L-lysine.. Its pathway is protein modification; protein ubiquitination. This Arabidopsis thaliana (Mouse-ear cress) protein is RING-H2 finger protein ATL3 (ATL3).